A 524-amino-acid polypeptide reads, in one-letter code: Capsid scaffolding protein (524 aa).

Residues H47, S116, and H137 each act as charge relay system in the active site. Residues 268 to 287 (DDLIPVPRSAFLNMLESTVS) form an interaction with pAP region. The short motif at 359 to 365 (RPRKRAR) is the Nuclear localization signal element. The disordered stretch occupies residues 359–378 (RPRKRAREDPEDEVSFPGEE). An interaction with major capsid protein region spans residues 504–524 (AETSKAATLQKLFCDEMLSKQ).

It belongs to the herpesviridae capsid scaffolding protein family. As to quaternary structure, homomultimer. Interacts with major capsid protein. Exists in a monomer-dimer equilibrium with the dimer being the active species. Post-translationally, capsid scaffolding protein is cleaved by assemblin after formation of the spherical procapsid. As a result, the capsid obtains its mature, icosahedral shape. Cleavages occur at two or more sites: release (R-site) and maturation (M-site).

The protein localises to the host cytoplasm. It is found in the host nucleus. The enzyme catalyses Cleaves -Ala-|-Ser- and -Ala-|-Ala- bonds in the scaffold protein.. In terms of biological role, acts as a scaffold protein by binding major capsid protein in the cytoplasm, inducing the nuclear localization of both proteins. Multimerizes in the nucleus such as major capsid protein forms the icosahedral T=16 capsid. Autocatalytic cleavage releases the assembly protein, and subsequently abolishes interaction with major capsid protein. Cleavages products are evicted from the capsid before or during DNA packaging. Protease that plays an essential role in virion assembly within the nucleus. Catalyzes the cleavage of the assembly protein after formation of the spherical procapsid. By that cleavage, the capsid matures and gains its icosahedral shape. The cleavage sites seem to include -Ala-Ser-, -Ala-Ala-, as well as Ala-Thr bonds. Assemblin and cleavages products are evicted from the capsid before or during DNA packaging. Its function is as follows. Plays a major role in capsid assembly. Acts as a scaffold protein by binding major capsid protein. Multimerizes in the nucleus such as major capsid protein forms the icosahedral T=16 capsid. Cleaved by assemblin after capsid completion. The cleavages products are evicted from the capsid before or during DNA packaging. This chain is Capsid scaffolding protein (17), found in Connochaetes taurinus (Blue wildebeest).